The sequence spans 144 residues: Nucleoside diphosphate kinase (144 aa).

Residues K11, F59, R87, T93, R104, and N114 each coordinate ATP. The active-site Pros-phosphohistidine intermediate is the H117.

This sequence belongs to the NDK family. As to quaternary structure, homotetramer. The cofactor is Mg(2+).

The protein resides in the cytoplasm. The enzyme catalyses a 2'-deoxyribonucleoside 5'-diphosphate + ATP = a 2'-deoxyribonucleoside 5'-triphosphate + ADP. It carries out the reaction a ribonucleoside 5'-diphosphate + ATP = a ribonucleoside 5'-triphosphate + ADP. Major role in the synthesis of nucleoside triphosphates other than ATP. The ATP gamma phosphate is transferred to the NDP beta phosphate via a ping-pong mechanism, using a phosphorylated active-site intermediate. This chain is Nucleoside diphosphate kinase, found in Coxiella burnetii (strain CbuG_Q212) (Coxiella burnetii (strain Q212)).